Consider the following 159-residue polypeptide: Cyclic pyranopterin monophosphate synthase (159 aa).

Substrate-binding positions include L75–H77 and M113–E114. The active site involves D128.

The protein belongs to the MoaC family. Homohexamer; trimer of dimers.

The enzyme catalyses (8S)-3',8-cyclo-7,8-dihydroguanosine 5'-triphosphate = cyclic pyranopterin phosphate + diphosphate. Its pathway is cofactor biosynthesis; molybdopterin biosynthesis. Its function is as follows. Catalyzes the conversion of (8S)-3',8-cyclo-7,8-dihydroguanosine 5'-triphosphate to cyclic pyranopterin monophosphate (cPMP). The sequence is that of Cyclic pyranopterin monophosphate synthase from Heliobacterium modesticaldum (strain ATCC 51547 / Ice1).